Consider the following 110-residue polypeptide: uncharacterized protein (110 aa).

Disordered regions lie at residues 1–42 and 66–110; these read MEWG…RAQQ and RQLG…AAEP. A coiled-coil region spans residues 36-68; sequence REERAQQLLDAVEQRQRQLLDTIAACEEMLRQL.

This is an uncharacterized protein from Homo sapiens (Human).